Consider the following 399-residue polypeptide: Serine/threonine-protein kinase PKZ1 (399 aa).

Residues 30–50 are disordered; it reads PMQCAYQTQSHSNPEGAKRGR. In terms of domain architecture, Protein kinase spans 92–371; the sequence is WQLFDQIGAG…ADQMLQHPWM (280 aa). ATP-binding positions include 98-106 and Lys-121; that span reads IGAGAFGVV. Asp-219 serves as the catalytic Proton acceptor.

This sequence belongs to the protein kinase superfamily. CAMK Ser/Thr protein kinase family.

The catalysed reaction is L-seryl-[protein] + ATP = O-phospho-L-seryl-[protein] + ADP + H(+). The enzyme catalyses L-threonyl-[protein] + ATP = O-phospho-L-threonyl-[protein] + ADP + H(+). In terms of biological role, may regulate an early stage of the zoospore pathway. This chain is Serine/threonine-protein kinase PKZ1, found in Phytophthora infestans (strain T30-4) (Potato late blight agent).